The following is a 178-amino-acid chain: Protein SPEAR1 (178 aa).

Disordered regions lie at residues 1–48 and 139–178; these read MGST…QRGL and HFLN…RLSL. Residues 14–28 show a composition bias toward low complexity; it reads SSPPSSSPTSSSSSP. The SPL signature appears at 46–54; it reads RGLGVAQLE. The span at 144 to 167 shows a compositional bias: polar residues; it reads DPSSTTRRSKSLGSGIQHSGSSEN. The short motif at 170–176 is the EAR element; sequence VDLELRL.

As to quaternary structure, interacts with SPL and SPEAR2. As to expression, not detected in leaves.

In terms of biological role, adapter-like transcriptional repressor recruiting TPL/TPR corepressors to inhibit TCP transcription factors. This is Protein SPEAR1 from Arabidopsis thaliana (Mouse-ear cress).